The following is a 379-amino-acid chain: UDP-4-amino-4-deoxy-L-arabinose--oxoglutarate aminotransferase (379 aa).

At Lys182 the chain carries N6-(pyridoxal phosphate)lysine.

It belongs to the DegT/DnrJ/EryC1 family. ArnB subfamily. As to quaternary structure, homodimer. Pyridoxal 5'-phosphate is required as a cofactor.

It catalyses the reaction UDP-4-amino-4-deoxy-beta-L-arabinose + 2-oxoglutarate = UDP-beta-L-threo-pentopyranos-4-ulose + L-glutamate. It functions in the pathway nucleotide-sugar biosynthesis; UDP-4-deoxy-4-formamido-beta-L-arabinose biosynthesis; UDP-4-deoxy-4-formamido-beta-L-arabinose from UDP-alpha-D-glucuronate: step 2/3. Its pathway is bacterial outer membrane biogenesis; lipopolysaccharide biosynthesis. Functionally, catalyzes the conversion of UDP-4-keto-arabinose (UDP-Ara4O) to UDP-4-amino-4-deoxy-L-arabinose (UDP-L-Ara4N). The modified arabinose is attached to lipid A and is required for resistance to polymyxin and cationic antimicrobial peptides. The polypeptide is UDP-4-amino-4-deoxy-L-arabinose--oxoglutarate aminotransferase (Escherichia coli O1:K1 / APEC).